Reading from the N-terminus, the 131-residue chain is Amicyanin (131 aa).

A signal peptide spans 1-26 (MISATKIRSCLAACVLAAFGATGALA). Positions 27 to 131 (DKATIPSESP…PFMRGKVVVE (105 aa)) constitute a Plastocyanin-like domain. Cu cation contacts are provided by His79, Cys118, His121, and Met124.

Cu cation serves as cofactor.

Its subcellular location is the periplasm. Its pathway is one-carbon metabolism; methylamine degradation. Primary acceptor of electrons from methylamine dehydrogenase. Passes those electrons on either a soluble cytochrome c or to pseudoazurin. The protein is Amicyanin (mauC) of Paracoccus denitrificans.